The primary structure comprises 352 residues: Sodium-lithium/proton antiporter (352 aa).

8 helical membrane passes run 11–31, 32–52, 61–81, 159–179, 216–236, 241–261, 271–291, and 317–337; these read ILLLLGILFVVAGYFILPVSV, PLIIALITALFLNPAVRWMQF, AVTIVFLLFVIMIGLLGTYAV, IPEYLISFLVYLIALFLFMLE, AQFLVSIVIFVVCLIGLFWIT, IVMSLIIWIVDFVPIIGSIVI, IVGDIAMGGQLAMLAIILLAI, and IGLQLIGLMGFILGPLLVIAF.

This sequence belongs to the autoinducer-2 exporter (AI-2E) (TC 2.A.86) family.

Its subcellular location is the cell membrane. Its function is as follows. Catalyzes the pH-dependent efflux of sodium and lithium in exchange for external protons. This is Sodium-lithium/proton antiporter from Halobacillus andaensis.